The chain runs to 42 residues: Conotoxin Au11.6 (42 aa).

Disulfide bonds link cysteine 6-cysteine 20, cysteine 13-cysteine 25, cysteine 19-cysteine 30, and cysteine 24-cysteine 37.

It belongs to the conotoxin I1 superfamily. As to expression, expressed by the venom duct.

The protein localises to the secreted. This Conus aulicus (Princely cone) protein is Conotoxin Au11.6.